The following is a 1274-amino-acid chain: DENN domain-containing protein 5B (1274 aa).

Ser-2 is modified (N-acetylserine). One can recognise a uDENN domain in the interval 39–244 (DELAGENFDQ…EVPLPPPGRS (206 aa)). Residues Ser-49 and Ser-178 each carry the phosphoserine modification. The cDENN domain maps to 263–399 (ELPLSDYPLR…VDFIQELSEV (137 aa)). The dDENN domain occupies 401–581 (VQFGIPPEGS…DNKIMSQWEE (181 aa)). The region spanning 772-932 (LEENTLIASL…DYFCFTSVFT (161 aa)) is the RUN 1 domain. Ser-822 carries the phosphoserine modification. A helical membrane pass occupies residues 916 to 936 (LLSLNAVDYFCFTSVFTTIMI). The PLAT domain occupies 936-1044 (IPYRSVIIPI…DDGSLERILI (109 aa)). Thr-1062 is subject to Phosphothreonine. 3 positions are modified to phosphoserine: Ser-1068, Ser-1076, and Ser-1079. The RUN 2 domain occupies 1118 to 1267 (TVLLCGENGL…QDFTIVLEGS (150 aa)).

Belongs to the RAB6IP1 family.

It localises to the membrane. Its function is as follows. Guanine nucleotide exchange factor (GEF) which may activate RAB39A and/or RAB39B. Promotes the exchange of GDP to GTP, converting inactive GDP-bound Rab proteins into their active GTP-bound form. In Homo sapiens (Human), this protein is DENN domain-containing protein 5B (DENND5B).